The primary structure comprises 103 residues: Nucleoid-associated protein A2cp1_3777 (103 aa).

The protein belongs to the YbaB/EbfC family. In terms of assembly, homodimer.

It localises to the cytoplasm. Its subcellular location is the nucleoid. Its function is as follows. Binds to DNA and alters its conformation. May be involved in regulation of gene expression, nucleoid organization and DNA protection. This chain is Nucleoid-associated protein A2cp1_3777, found in Anaeromyxobacter dehalogenans (strain 2CP-1 / ATCC BAA-258).